The chain runs to 246 residues: Protein DEHYDRATION-INDUCED 19 homolog 3 (246 aa).

Residues 185 to 230 (ERSKAPVPIPDDTSIHKDTPAQPWESRIDSSLTSEEREQKRKQATD) form a disordered region. A compositionally biased stretch (basic and acidic residues) spans 218 to 229 (SEEREQKRKQAT).

Belongs to the Di19 family.

The polypeptide is Protein DEHYDRATION-INDUCED 19 homolog 3 (DI19-3) (Oryza sativa subsp. japonica (Rice)).